We begin with the raw amino-acid sequence, 407 residues long: Protoasukamycin 4-monooxygenase (407 aa).

In terms of assembly, does not interact with AsuE2, suggesting a possible transient interaction between the two enzymes instead of formation of a stable complex. FMN is required as a cofactor. Requires FAD as cofactor. It depends on riboflavin as a cofactor.

It carries out the reaction protoasukamycin + NADH + O2 + H(+) = 4-hydroxyprotoasukamycin + NAD(+) + H2O. It functions in the pathway antibiotic biosynthesis. Its activity is regulated as follows. When flavin concentration is low, activity is enhanced by the presence of the NADH-dependent flavin reductase AsuE2. In the presence of abundant flavin, activity of AsuE1 is not affected by AsuE2. Functionally, involved in the biosynthesis of the antibiotic asukamycin. Catalyzes the conversion of protoasukamycin to 4-hydroxyprotoasukamycin. Can also convert some protoasukamycin derivatives into their corresponding 4-hydroxyprotoasukamycin derivatives. Can also use NADPH, but catalytic efficiency is 50-fold higher with NADH. In Streptomyces nodosus subsp. asukaensis, this protein is Protoasukamycin 4-monooxygenase.